A 189-amino-acid chain; its full sequence is uncharacterized protein (189 aa).

Belongs to the flavoredoxin family. The cofactor is FMN.

This is an uncharacterized protein from Escherichia coli (strain K12).